The sequence spans 270 residues: Imidazole glycerol phosphate synthase subunit HisF (270 aa).

Residues Asp11 and Asp130 contribute to the active site.

Belongs to the HisA/HisF family. Heterodimer of HisH and HisF.

Its subcellular location is the cytoplasm. The catalysed reaction is 5-[(5-phospho-1-deoxy-D-ribulos-1-ylimino)methylamino]-1-(5-phospho-beta-D-ribosyl)imidazole-4-carboxamide + L-glutamine = D-erythro-1-(imidazol-4-yl)glycerol 3-phosphate + 5-amino-1-(5-phospho-beta-D-ribosyl)imidazole-4-carboxamide + L-glutamate + H(+). It participates in amino-acid biosynthesis; L-histidine biosynthesis; L-histidine from 5-phospho-alpha-D-ribose 1-diphosphate: step 5/9. Functionally, IGPS catalyzes the conversion of PRFAR and glutamine to IGP, AICAR and glutamate. The HisF subunit catalyzes the cyclization activity that produces IGP and AICAR from PRFAR using the ammonia provided by the HisH subunit. This chain is Imidazole glycerol phosphate synthase subunit HisF, found in Sorangium cellulosum (strain So ce56) (Polyangium cellulosum (strain So ce56)).